The following is a 465-amino-acid chain: MKHIVKHIHFVGIGGAGMSGIAEVLVNLGYQVSGSDLARNAVTERLEALGARVSIGHDAANIEGANAVVVSTAVRSDNPEVLAARRLRVPIVPRAVMLAELMRLKQGIAIAGTHGKTTTTSLVASVLAAGGLDPTFVIGGRLTSAGANARLGTGDFIVAEADESDASFLNLYPVIEVITNIDADHMDTYGHDFARLKQAFIEFTQRLPFYGSAVVCIDDPNVRQIVPLISKPVVRYGFAADAQVRAENVEARDGRMHFTVLREGREPLPVVLNLPGLHNVQNALAAIAIATDLDVADTAIQQALAEFNGVGRRFQRYGEMPAAGGGAYTLIDDYGHHPVEMAATIAAARGAFPGRRLVLAFQPHRYTRTRDCFDDFVNVLSTVDALVLTEVYAAGEAPISTANGDALSRALRAAGKVEPVFVATVDEVPDALAKLARAGDVVITMGAGSIGGVPGKLAQDTQQKG.

112–118 (GTHGKTT) contacts ATP.

This sequence belongs to the MurCDEF family.

The protein resides in the cytoplasm. It catalyses the reaction UDP-N-acetyl-alpha-D-muramate + L-alanine + ATP = UDP-N-acetyl-alpha-D-muramoyl-L-alanine + ADP + phosphate + H(+). It participates in cell wall biogenesis; peptidoglycan biosynthesis. In terms of biological role, cell wall formation. This Burkholderia thailandensis (strain ATCC 700388 / DSM 13276 / CCUG 48851 / CIP 106301 / E264) protein is UDP-N-acetylmuramate--L-alanine ligase.